A 429-amino-acid polypeptide reads, in one-letter code: Enolase (429 aa).

Residue glutamine 169 coordinates (2R)-2-phosphoglycerate. Glutamate 211 functions as the Proton donor in the catalytic mechanism. Mg(2+)-binding residues include aspartate 248, glutamate 289, and aspartate 316. 4 residues coordinate (2R)-2-phosphoglycerate: lysine 341, arginine 370, serine 371, and lysine 392. Lysine 341 serves as the catalytic Proton acceptor.

This sequence belongs to the enolase family. Requires Mg(2+) as cofactor.

It localises to the cytoplasm. Its subcellular location is the secreted. The protein resides in the cell surface. It carries out the reaction (2R)-2-phosphoglycerate = phosphoenolpyruvate + H2O. The protein operates within carbohydrate degradation; glycolysis; pyruvate from D-glyceraldehyde 3-phosphate: step 4/5. In terms of biological role, catalyzes the reversible conversion of 2-phosphoglycerate (2-PG) into phosphoenolpyruvate (PEP). It is essential for the degradation of carbohydrates via glycolysis. In Anaplasma phagocytophilum (strain HZ), this protein is Enolase.